A 600-amino-acid polypeptide reads, in one-letter code: ATP-dependent zinc metalloprotease FtsH 1 (600 aa).

Over 1–8 (MKTHYFKK) the chain is Cytoplasmic. The helical transmembrane segment at 9–29 (IFNLKFLVIFFSILFCILLIL) threads the bilayer. Topologically, residues 30–130 (DLTFERRIKG…PKTDFHLSEL (101 aa)) are extracellular. A helical transmembrane segment spans residues 131–151 (ILSLVPIVSSTIFMFYIISNI). At 152 to 600 (KKSSGKLNSN…IEQLVVNTKK (449 aa)) the chain is on the cytoplasmic side. ATP is bound at residue 215-222 (GPPGTGKT). Histidine 437 is a Zn(2+) binding site. The active site involves glutamate 438. Zn(2+)-binding residues include histidine 441 and aspartate 513.

This sequence in the central section; belongs to the AAA ATPase family. In the C-terminal section; belongs to the peptidase M41 family. In terms of assembly, homohexamer. Zn(2+) is required as a cofactor.

Its subcellular location is the cell membrane. In terms of biological role, acts as a processive, ATP-dependent zinc metallopeptidase for both cytoplasmic and membrane proteins. Plays a role in the quality control of integral membrane proteins. The chain is ATP-dependent zinc metalloprotease FtsH 1 from Phytoplasma mali (strain AT).